Consider the following 167-residue polypeptide: Caffeine dehydrogenase subunit gamma (167 aa).

A 2Fe-2S ferredoxin-type domain is found at 4-80 (HVISLTVNGQ…GHSIRTVEAL (77 aa)). [2Fe-2S] cluster-binding residues include Cys-42, Cys-47, Cys-50, and Cys-62.

In terms of assembly, heterotrimer composed of an alpha (CdhA), a beta (CdhB) and a gamma (CdhC) subunit.

The catalysed reaction is caffeine + a ubiquinone + H2O = 1,3,7-trimethylurate + a ubiquinol. It carries out the reaction ubiquinone-0 + caffeine + H2O = ubiquinol-0 + 1,3,7-trimethylurate. It catalyses the reaction theobromine + a ubiquinone + H2O = 3,7-dimethylurate + a ubiquinol. Functionally, component of the caffeine dehydrogenase complex that catalyzes the hydrolytical oxidation of 1,3,7-trimethylxanthine (caffeine) by incorporation of an oxygen atom originating from a water molecule into position C-8 to produce 1,3,7-trimethyluric acid (TMU). Coenzyme Q0 (ubiquinone-0) is the preferred electron acceptor and, to a lesser extent, coenzyme Q2 (ubiquinone-2) can also be used, but oxygen and NAD(P)(+) cannot. Is involved in a caffeine degradation pathway that allows Pseudomonas sp. strain CBB1 to grow on caffeine as the sole carbon and nitrogen source. Is also active with theobromine as substrate, but shows a very poor activity with theophylline and is not active with xanthine, 3-methylxanthine, 7-methylxanthine, TMU, and 3,7-dimethylurate. The chain is Caffeine dehydrogenase subunit gamma from Pseudomonas sp. (strain CBB1).